A 573-amino-acid polypeptide reads, in one-letter code: Flagellin B (573 aa).

The protein belongs to the bacterial flagellin family. Heteromer of FlaA and FlaB. A flagellar filament composed exclusively of FlaA is indistinguishable in length from that of the wild-type and shows a slight reduction in motility. The flagellar filament composed exclusively of the FlaB is severely truncated in length and greatly reduced in motility. Thus, while both flagellins are not necessary for motility, both are required for a fully active flagellar filament.

It is found in the secreted. The protein localises to the bacterial flagellum. Its function is as follows. Flagellin is the subunit protein which polymerizes to form the filaments of bacterial flagella. This chain is Flagellin B (flaB), found in Campylobacter coli.